Here is a 318-residue protein sequence, read N- to C-terminus: Transaldolase (318 aa).

The Schiff-base intermediate with substrate role is filled by K132.

The protein belongs to the transaldolase family. Type 1 subfamily. As to quaternary structure, homodimer.

The protein resides in the cytoplasm. The catalysed reaction is D-sedoheptulose 7-phosphate + D-glyceraldehyde 3-phosphate = D-erythrose 4-phosphate + beta-D-fructose 6-phosphate. It functions in the pathway carbohydrate degradation; pentose phosphate pathway; D-glyceraldehyde 3-phosphate and beta-D-fructose 6-phosphate from D-ribose 5-phosphate and D-xylulose 5-phosphate (non-oxidative stage): step 2/3. Its function is as follows. Transaldolase is important for the balance of metabolites in the pentose-phosphate pathway. This is Transaldolase from Shewanella baltica (strain OS185).